The sequence spans 894 residues: MFTKLMTAIFGSSNDRTLRRLNKRVAQINRLEAEFEKLTDEQLQAKTAEFKQRLAEGATLDSLLHEAFATVREASKRVLGMRHFDVQLIGGMVLTERNIAEMRTGEGKTLTATLPCYLNALTGKGVHVVTVNDYLARRDAETNRPLFEFLGMTVAVNIPGLPSDVKRQAYLADITYATNSELGFDYLRDNLAHSKEERFQRPLHYALVDEVDSILIDEARTPLIISGPAEDATQIYQAIDKVIPHLIAQDKEDTEEYTGDGDFTLDLKSKQAHLTERGQVKVENILTKMGLMHEGESLYHPARISLLHHVYAALRAHKLFEVNVDYIVKDGEIVIIDEHTGRTMAGRRWSDGLHQAIEAKEGVNIQGENQTVASITYQNYFRLYEKLAGMTGTADTEAFEFQQIYGLDTVVIPTNRPMIRDDKTDLMFKSEPEKFQAVIKDIQDCIARKQPVLVGTISIEKSEALSEALKQAGIPHKVLNAKFHAQEAEIVADAGYPGAVTIATNMAGRGTDIVLGGNWKAEIAKLENPTQEQIDEIKAKWQERHDIVMQAGGLHIIGTERHESRRIDNQLRGRSGRQGDPGSSRFYLSLDDALMRIYLNEGKLNMMRKAFTEEGEAMESKLLTKVIASAQAKVEAYNFDGRKQLLQYDDVANEQRKAIYEQRNYLLETDDISAMINTVREDVFNAVIDQYIPPQSIEEMWDVPALENRLKQEFGMELPIVKWLEAEDDLHEETLRERIINIAKEQYQAKEAMVGAEVMRSFEKGVMLQNLDELWKEHLSAMDYLRKGIHLRGYAQKDPKQEYKKESFAMFTDMLDHLKSNVISVLSRIQVRSQEEVEQAERERQAHAEQESSHYHAEGEGQDFSDLHIGRNEPCPCGSGKKYKHCHGSKAKYS.

ATP is bound by residues Gln-87, 105 to 109 (GEGKT), and Asp-512. The tract at residues 836–870 (EVEQAERERQAHAEQESSHYHAEGEGQDFSDLHIG) is disordered. Cys-875, Cys-877, Cys-886, and His-887 together coordinate Zn(2+).

This sequence belongs to the SecA family. Monomer and homodimer. Part of the essential Sec protein translocation apparatus which comprises SecA, SecYEG and auxiliary proteins SecDF-YajC and YidC. Zn(2+) serves as cofactor.

The protein resides in the cell inner membrane. It localises to the cytoplasm. The catalysed reaction is ATP + H2O + cellular proteinSide 1 = ADP + phosphate + cellular proteinSide 2.. Part of the Sec protein translocase complex. Interacts with the SecYEG preprotein conducting channel. Has a central role in coupling the hydrolysis of ATP to the transfer of proteins into and across the cell membrane, serving both as a receptor for the preprotein-SecB complex and as an ATP-driven molecular motor driving the stepwise translocation of polypeptide chains across the membrane. The sequence is that of Protein translocase subunit SecA from Glaesserella parasuis serovar 5 (strain SH0165) (Haemophilus parasuis).